The primary structure comprises 407 residues: Imidazolonepropionase (407 aa).

2 residues coordinate Fe(3+): His-68 and His-70. Zn(2+) is bound by residues His-68 and His-70. 4-imidazolone-5-propanoate is bound by residues Arg-77, Tyr-140, and His-173. Residue Tyr-140 participates in N-formimidoyl-L-glutamate binding. His-238 serves as a coordination point for Fe(3+). Residue His-238 participates in Zn(2+) binding. 4-imidazolone-5-propanoate is bound at residue Gln-241. Residue Asp-313 participates in Fe(3+) binding. Asp-313 provides a ligand contact to Zn(2+). Residues Asn-315 and Gly-317 each contribute to the N-formimidoyl-L-glutamate site. Thr-318 contributes to the 4-imidazolone-5-propanoate binding site.

It belongs to the metallo-dependent hydrolases superfamily. HutI family. Requires Zn(2+) as cofactor. It depends on Fe(3+) as a cofactor.

The protein resides in the cytoplasm. It catalyses the reaction 4-imidazolone-5-propanoate + H2O = N-formimidoyl-L-glutamate. It functions in the pathway amino-acid degradation; L-histidine degradation into L-glutamate; N-formimidoyl-L-glutamate from L-histidine: step 3/3. Functionally, catalyzes the hydrolytic cleavage of the carbon-nitrogen bond in imidazolone-5-propanoate to yield N-formimidoyl-L-glutamate. It is the third step in the universal histidine degradation pathway. This is Imidazolonepropionase from Burkholderia pseudomallei (strain 1710b).